The sequence spans 327 residues: Malate dehydrogenase (327 aa).

12 to 18 (GAAGQIG) is an NAD(+) binding site. 2 residues coordinate substrate: Arg93 and Arg99. Residues Asn106, Gln113, and 130 to 132 (VGN) contribute to the NAD(+) site. The substrate site is built by Asn132 and Arg163. The active-site Proton acceptor is His188.

It belongs to the LDH/MDH superfamily. MDH type 2 family.

It carries out the reaction (S)-malate + NAD(+) = oxaloacetate + NADH + H(+). In terms of biological role, catalyzes the reversible oxidation of malate to oxaloacetate. The polypeptide is Malate dehydrogenase (Cupriavidus necator (strain ATCC 17699 / DSM 428 / KCTC 22496 / NCIMB 10442 / H16 / Stanier 337) (Ralstonia eutropha)).